The chain runs to 198 residues: MICOS complex subunit MIC26 (198 aa).

Positions 1 to 25 are cleaved as a signal peptide; sequence MFKVIQRSVGPASLSLLTFKVYAAP. Residues 108-128 form a helical membrane-spanning segment; the sequence is PGFFPRLGVIGFAGLIGLLLA. O-linked (Xyl...) (chondroitin sulfate) serine glycosylation is present at Ser-162.

This sequence belongs to the apolipoprotein O/MICOS complex subunit Mic27 family. Component of the mitochondrial contact site and cristae organizing system (MICOS) complex, composed of at least MICOS10/MIC10, CHCHD3/MIC19, CHCHD6/MIC25, APOOL/MIC27, IMMT/MIC60, APOO/MIC23/MIC26 and MICOS13/MIC13. This complex was also known under the names MINOS or MitOS complex. he MICOS complex associates with mitochondrial outer membrane proteins SAMM50, MTX1 and MTX2 (together described as components of the mitochondrial outer membrane sorting assembly machinery (SAM) complex) and DNAJC11, mitochondrial inner membrane protein TMEM11 and with HSPA9. The MICOS and SAM complexes together with DNAJC11 are part of a large protein complex spanning both membranes termed the mitochondrial intermembrane space bridging (MIB) complex. Interacts with IMMT/MIC60. Interacts with MICOS10/MIC10 and APOOL/MIC27. Post-translationally, O-glycosylation; glycosaminoglycan of chondroitin-sulfate type. As to expression, expressed in all tissues examined. Up-regulated in diabetic heart.

Its subcellular location is the mitochondrion inner membrane. It localises to the secreted. The protein resides in the mitochondrion. It is found in the golgi apparatus membrane. The protein localises to the endoplasmic reticulum membrane. Functionally, component of the MICOS complex, a large protein complex of the mitochondrial inner membrane that plays crucial roles in the maintenance of crista junctions, inner membrane architecture, and formation of contact sites to the outer membrane. Plays a crucial role in crista junction formation and mitochondrial function. Can promote cardiac lipotoxicity by enhancing mitochondrial respiration and fatty acid metabolism in cardiac myoblasts. Promotes cholesterol efflux from macrophage cells. Detected in HDL, LDL and VLDL. Secreted by a microsomal triglyceride transfer protein (MTTP)-dependent mechanism, probably as a VLDL-associated protein that is subsequently transferred to HDL. This chain is MICOS complex subunit MIC26 (APOO), found in Homo sapiens (Human).